The primary structure comprises 683 residues: UvrABC system protein B (683 aa).

Residues 31-414 (AGFEKGYKEQ…ELERTDHKVE (384 aa)) form the Helicase ATP-binding domain. ATP is bound at residue 44-51 (GATGTGKT). Residues 97 to 120 (YYDYYQPEAYVPQSDTYIEKDSAI) carry the Beta-hairpin motif. The region spanning 435–601 (QIDDLVGEIN…TIIKPVHDVI (167 aa)) is the Helicase C-terminal domain. The UVR domain maps to 632 to 667 (KTMIKNLQEQMKEAAKKLDFEEAANLRDAIMELQSS). The interval 662 to 683 (MELQSSSRRPKTRKGKALNGKR) is disordered. The span at 669–683 (RRPKTRKGKALNGKR) shows a compositional bias: basic residues.

Belongs to the UvrB family. Forms a heterotetramer with UvrA during the search for lesions. Interacts with UvrC in an incision complex.

The protein resides in the cytoplasm. In terms of biological role, the UvrABC repair system catalyzes the recognition and processing of DNA lesions. A damage recognition complex composed of 2 UvrA and 2 UvrB subunits scans DNA for abnormalities. Upon binding of the UvrA(2)B(2) complex to a putative damaged site, the DNA wraps around one UvrB monomer. DNA wrap is dependent on ATP binding by UvrB and probably causes local melting of the DNA helix, facilitating insertion of UvrB beta-hairpin between the DNA strands. Then UvrB probes one DNA strand for the presence of a lesion. If a lesion is found the UvrA subunits dissociate and the UvrB-DNA preincision complex is formed. This complex is subsequently bound by UvrC and the second UvrB is released. If no lesion is found, the DNA wraps around the other UvrB subunit that will check the other stand for damage. This is UvrABC system protein B from Lactobacillus acidophilus (strain ATCC 700396 / NCK56 / N2 / NCFM).